A 299-amino-acid polypeptide reads, in one-letter code: Bifunctional protein FolD (299 aa).

NADP(+) is bound by residues 168–170 (GRS), serine 193, and isoleucine 234.

This sequence belongs to the tetrahydrofolate dehydrogenase/cyclohydrolase family. As to quaternary structure, homodimer.

It carries out the reaction (6R)-5,10-methylene-5,6,7,8-tetrahydrofolate + NADP(+) = (6R)-5,10-methenyltetrahydrofolate + NADPH. The enzyme catalyses (6R)-5,10-methenyltetrahydrofolate + H2O = (6R)-10-formyltetrahydrofolate + H(+). It functions in the pathway one-carbon metabolism; tetrahydrofolate interconversion. In terms of biological role, catalyzes the oxidation of 5,10-methylenetetrahydrofolate to 5,10-methenyltetrahydrofolate and then the hydrolysis of 5,10-methenyltetrahydrofolate to 10-formyltetrahydrofolate. The protein is Bifunctional protein FolD of Rhizobium johnstonii (strain DSM 114642 / LMG 32736 / 3841) (Rhizobium leguminosarum bv. viciae).